The following is a 146-amino-acid chain: MKNEMHLEFSALSQNESFARVTVASFIAQLDPTMDELTEIKTVVSEAVTNAIIHGYEENCEGKVYISVTLEDHVVYMTIRDEGLGITDLEEARQPLFTTKPELERSGMGFTIMENFMDDVSIDSSPEMGTTIRLTKHLSKSKALCN.

Belongs to the anti-sigma-factor family.

The catalysed reaction is L-seryl-[protein] + ATP = O-phospho-L-seryl-[protein] + ADP + H(+). The enzyme catalyses L-threonyl-[protein] + ATP = O-phospho-L-threonyl-[protein] + ADP + H(+). Its function is as follows. Binds to sigma F and blocks its ability to form an RNA polymerase holoenzyme (E-sigma F). Phosphorylates SpoIIAA on a serine residue. This phosphorylation may enable SpoIIAA to act as an anti-anti-sigma factor that counteracts SpoIIAB and thus releases sigma F from inhibition. The chain is Anti-sigma F factor (spoIIAB) from Bacillus subtilis (strain 168).